We begin with the raw amino-acid sequence, 959 residues long: Isoleucine--tRNA ligase (959 aa).

Residues 66-76 (PYANGDIHIGH) carry the 'HIGH' region motif. An L-isoleucyl-5'-AMP-binding site is contributed by glutamate 592. Residues 633–637 (KMSKS) carry the 'KMSKS' region motif. Lysine 636 contacts ATP. Zn(2+) contacts are provided by cysteine 922, cysteine 925, cysteine 942, and cysteine 945.

This sequence belongs to the class-I aminoacyl-tRNA synthetase family. IleS type 1 subfamily. Monomer. Zn(2+) is required as a cofactor.

The protein resides in the cytoplasm. It carries out the reaction tRNA(Ile) + L-isoleucine + ATP = L-isoleucyl-tRNA(Ile) + AMP + diphosphate. Its function is as follows. Catalyzes the attachment of isoleucine to tRNA(Ile). As IleRS can inadvertently accommodate and process structurally similar amino acids such as valine, to avoid such errors it has two additional distinct tRNA(Ile)-dependent editing activities. One activity is designated as 'pretransfer' editing and involves the hydrolysis of activated Val-AMP. The other activity is designated 'posttransfer' editing and involves deacylation of mischarged Val-tRNA(Ile). The sequence is that of Isoleucine--tRNA ligase from Cupriavidus metallidurans (strain ATCC 43123 / DSM 2839 / NBRC 102507 / CH34) (Ralstonia metallidurans).